A 145-amino-acid chain; its full sequence is Transcription antitermination protein NusB (145 aa).

The protein belongs to the NusB family.

Functionally, involved in transcription antitermination. Required for transcription of ribosomal RNA (rRNA) genes. Binds specifically to the boxA antiterminator sequence of the ribosomal RNA (rrn) operons. In Citrifermentans bemidjiense (strain ATCC BAA-1014 / DSM 16622 / JCM 12645 / Bem) (Geobacter bemidjiensis), this protein is Transcription antitermination protein NusB.